The primary structure comprises 199 residues: Putative DNA-directed RNA polymerase subunit L376 (199 aa).

It belongs to the eukaryotic RPB7/RPC8 RNA polymerase subunit family.

The protein localises to the virion. It carries out the reaction RNA(n) + a ribonucleoside 5'-triphosphate = RNA(n+1) + diphosphate. This chain is Putative DNA-directed RNA polymerase subunit L376, found in Acanthamoeba polyphaga (Amoeba).